We begin with the raw amino-acid sequence, 200 residues long: Charged multivesicular body protein 6-A (200 aa).

Residue G2 is the site of N-myristoyl glycine attachment. Positions 9–102 (RRSRVTEQDK…FAQIEMKVIE (94 aa)) form a coiled coil. A disordered region spans residues 166–200 (EDLELPEAPSEPLPDTIPEKQAVKNKPKPQMIAAS). The short motif at 168–179 (LELPEAPSEPLP) is the Type-2 MIT-interacting motif element.

Belongs to the SNF7 family. Probable core component of the endosomal sorting required for transport complex III (ESCRT-III). ESCRT-III components are thought to multimerize to form a flat lattice on the perimeter membrane of the endosome.

The protein localises to the endomembrane system. The protein resides in the late endosome membrane. In terms of biological role, probable core component of the endosomal sorting required for transport complex III (ESCRT-III) which is involved in multivesicular bodies (MVBs) formation and sorting of endosomal cargo proteins into MVBs. MVBs contain intraluminal vesicles (ILVs) that are generated by invagination and scission from the limiting membrane of the endosome and mostly are delivered to lysosomes enabling degradation of membrane proteins, such as stimulated growth factor receptors, lysosomal enzymes and lipids. In the ESCRT-III complex, it probably serves as an acceptor for the ESCRT-II complex on endosomal membranes. In Xenopus laevis (African clawed frog), this protein is Charged multivesicular body protein 6-A (chmp6-a).